The following is a 1057-amino-acid chain: Diacylglycerol kinase iota (1057 aa).

Over residues 15–59 the composition is skewed to low complexity; the sequence is AARGPARAPAAAAAAAASPPGPCSGAACAPSAAAGAGAMNPSSSA. Disordered regions lie at residues 15-74 and 334-358; these read AARG…SSGS and LKASNRKKKRTSFKRKASKRGMEQE. Positions 337-352 are enriched in basic residues; that stretch reads SNRKKKRTSFKRKASK. The region spanning 372 to 507 is the DAGKc domain; that stretch reads PLMKPLLVFV…DRWNLHVERN (136 aa). 2 ANK repeats span residues 950–979 and 986–1015; these read DHCSLLHYAAKTGNGEIVKYILDHGPSELL and TGETALHKAACQRNRAVCQLLVDAGASLRK. Positions 1014–1024 are enriched in basic and acidic residues; that stretch reads RKTDSKGKTPQ. The tract at residues 1014 to 1033 is disordered; the sequence is RKTDSKGKTPQERAQQAGDP. Residues 1055 to 1057 carry the PDZ-binding motif; the sequence is TAV.

This sequence belongs to the eukaryotic diacylglycerol kinase family. In terms of assembly, interacts (via PDZ-binding motif) with DLG4; controls the localization of DGKI to the synapse. Interacts (via PDZ-binding motif) with DLG1. Interacts (via PDZ-binding motif) with DLG2. Interacts (via PDZ-binding motif) with DLG3. May interact with RASGRP3; involved in the regulation of RASGRP3 activity. As to expression, specifically expressed in brain and retina. In brain, highly expressed in hippocampus, caudate nucleus, occipital pole, cerebral cortex, and cerebellum. Also detected in kidney.

The protein localises to the cell projection. It is found in the axon. It localises to the dendrite. The protein resides in the presynapse. Its subcellular location is the postsynapse. The protein localises to the postsynaptic density. It is found in the synaptic cell membrane. It localises to the cytoplasmic vesicle. The protein resides in the secretory vesicle. Its subcellular location is the synaptic vesicle membrane. The protein localises to the cytoplasm. It is found in the cytosol. It localises to the nucleus. It carries out the reaction a 1,2-diacyl-sn-glycerol + ATP = a 1,2-diacyl-sn-glycero-3-phosphate + ADP + H(+). The enzyme catalyses 1,2-di-(9Z-octadecenoyl)-sn-glycerol + ATP = 1,2-di-(9Z-octadecenoyl)-sn-glycero-3-phosphate + ADP + H(+). It catalyses the reaction 1-octadecanoyl-2-(5Z,8Z,11Z,14Z-eicosatetraenoyl)-sn-glycerol + ATP = 1-octadecanoyl-2-(5Z,8Z,11Z,14Z-eicosatetraenoyl)-sn-glycero-3-phosphate + ADP + H(+). The catalysed reaction is 1-octadecanoyl-2-(9Z,12Z)-octadecadienoyl-sn-glycerol + ATP = 1-octadecanoyl-2-(9Z,12Z-octadecadienoyl)-sn-glycero-3-phosphate + ADP + H(+). It participates in lipid metabolism; glycerolipid metabolism. Its function is as follows. Diacylglycerol kinase that converts diacylglycerol/DAG into phosphatidic acid/phosphatidate/PA and regulates the respective levels of these two bioactive lipids. Thereby, acts as a central switch between the signaling pathways activated by these second messengers with different cellular targets and opposite effects in numerous biological processes. Has probably no preference for any of the diacylglycerols in terms of the acyl chain composition, especially for the acyl chain at the sn-2 position. By controlling the diacylglycerol/DAG-mediated activation of RASGRP3, negatively regulates the Rap1 signaling pathway. May play a role in presynaptic diacylglycerol/DAG signaling and control neurotransmitter release during metabotropic glutamate receptor-dependent long-term depression. The polypeptide is Diacylglycerol kinase iota (Homo sapiens (Human)).